The chain runs to 734 residues: Photosystem I P700 chlorophyll a apoprotein A2 (734 aa).

Helical transmembrane passes span 46–69 (IFAS…FHVA), 135–158 (LYNG…LHLQ), 175–199 (LNHH…HVAI), 273–291 (IAHH…GHMY), 330–353 (LHFQ…QHMY), 369–395 (AALY…IFFI), 417–439 (AIIS…LYVH), and 517–535 (FLVH…LILV). Residues Cys-559 and Cys-568 each coordinate [4Fe-4S] cluster. Helical transmembrane passes span 575–596 (AFYL…YWHW) and 643–665 (LSVW…MFLI). Chlorophyll a-binding residues include His-654, Met-662, and Tyr-670. A phylloquinone-binding site is contributed by Trp-671. A helical membrane pass occupies residues 707 to 727 (LVGLAHFSVGYIFTYAAFLIA).

The protein belongs to the PsaA/PsaB family. In terms of assembly, the PsaA/B heterodimer binds the P700 chlorophyll special pair and subsequent electron acceptors. PSI consists of a core antenna complex that captures photons, and an electron transfer chain that converts photonic excitation into a charge separation. The eukaryotic PSI reaction center is composed of at least 11 subunits. Requires P700 is a chlorophyll a/chlorophyll a' dimer, A0 is one or more chlorophyll a, A1 is one or both phylloquinones and FX is a shared 4Fe-4S iron-sulfur center. as cofactor.

Its subcellular location is the plastid. The protein resides in the chloroplast thylakoid membrane. The enzyme catalyses reduced [plastocyanin] + hnu + oxidized [2Fe-2S]-[ferredoxin] = oxidized [plastocyanin] + reduced [2Fe-2S]-[ferredoxin]. In terms of biological role, psaA and PsaB bind P700, the primary electron donor of photosystem I (PSI), as well as the electron acceptors A0, A1 and FX. PSI is a plastocyanin-ferredoxin oxidoreductase, converting photonic excitation into a charge separation, which transfers an electron from the donor P700 chlorophyll pair to the spectroscopically characterized acceptors A0, A1, FX, FA and FB in turn. Oxidized P700 is reduced on the lumenal side of the thylakoid membrane by plastocyanin. In Marchantia polymorpha (Common liverwort), this protein is Photosystem I P700 chlorophyll a apoprotein A2.